The chain runs to 85 residues: Putative membrane protein insertion efficiency factor (85 aa).

The protein belongs to the UPF0161 family.

It is found in the cell inner membrane. Functionally, could be involved in insertion of integral membrane proteins into the membrane. This Sodalis glossinidius (strain morsitans) protein is Putative membrane protein insertion efficiency factor.